The primary structure comprises 373 residues: ATP-dependent 6-phosphofructokinase (373 aa).

Residues glycine 12, 74–75, and 110–113 contribute to the ATP site; these read RD and GGGT. Substrate-binding positions include 133 to 135, arginine 170, 177 to 179, glutamate 230, arginine 291, and 297 to 300; these read TID, MGH, and YVQR. The active-site Proton acceptor is aspartate 135.

It belongs to the phosphofructokinase type A (PFKA) family. Mixed-substrate PFK group III subfamily. In terms of assembly, homodimer or homotetramer. Mg(2+) serves as cofactor.

It is found in the cytoplasm. The enzyme catalyses beta-D-fructose 6-phosphate + ATP = beta-D-fructose 1,6-bisphosphate + ADP + H(+). It functions in the pathway carbohydrate degradation; glycolysis; D-glyceraldehyde 3-phosphate and glycerone phosphate from D-glucose: step 3/4. Functionally, catalyzes the phosphorylation of D-fructose 6-phosphate to fructose 1,6-bisphosphate by ATP, the first committing step of glycolysis. This chain is ATP-dependent 6-phosphofructokinase, found in Propionibacterium freudenreichii subsp. shermanii (strain ATCC 9614 / DSM 4902 / CIP 103027 / NCIMB 8099 / CIRM-BIA1).